The following is a 325-amino-acid chain: Phosphatidylserine decarboxylase proenzyme (325 aa).

Residues Asp-90, His-147, and Ser-253 each act as charge relay system; for autoendoproteolytic cleavage activity in the active site. Catalysis depends on Ser-253, which acts as the Schiff-base intermediate with substrate; via pyruvic acid; for decarboxylase activity. Residue Ser-253 is modified to Pyruvic acid (Ser); by autocatalysis. Positions 281-325 (MASKMSSQKAITPEQTTETPVQASNEFDDNAGETKKDTPSEGADS) are disordered. Residues 284–305 (KMSSQKAITPEQTTETPVQASN) are compositionally biased toward polar residues.

This sequence belongs to the phosphatidylserine decarboxylase family. PSD-B subfamily. Prokaryotic type I sub-subfamily. Heterodimer of a large membrane-associated beta subunit and a small pyruvoyl-containing alpha subunit. Pyruvate serves as cofactor. Is synthesized initially as an inactive proenzyme. Formation of the active enzyme involves a self-maturation process in which the active site pyruvoyl group is generated from an internal serine residue via an autocatalytic post-translational modification. Two non-identical subunits are generated from the proenzyme in this reaction, and the pyruvate is formed at the N-terminus of the alpha chain, which is derived from the carboxyl end of the proenzyme. The autoendoproteolytic cleavage occurs by a canonical serine protease mechanism, in which the side chain hydroxyl group of the serine supplies its oxygen atom to form the C-terminus of the beta chain, while the remainder of the serine residue undergoes an oxidative deamination to produce ammonia and the pyruvoyl prosthetic group on the alpha chain. During this reaction, the Ser that is part of the protease active site of the proenzyme becomes the pyruvoyl prosthetic group, which constitutes an essential element of the active site of the mature decarboxylase.

It is found in the cell membrane. It catalyses the reaction a 1,2-diacyl-sn-glycero-3-phospho-L-serine + H(+) = a 1,2-diacyl-sn-glycero-3-phosphoethanolamine + CO2. It participates in phospholipid metabolism; phosphatidylethanolamine biosynthesis; phosphatidylethanolamine from CDP-diacylglycerol: step 2/2. Catalyzes the formation of phosphatidylethanolamine (PtdEtn) from phosphatidylserine (PtdSer). This is Phosphatidylserine decarboxylase proenzyme from Alteromonas mediterranea (strain DSM 17117 / CIP 110805 / LMG 28347 / Deep ecotype).